The chain runs to 170 residues: Small ribosomal subunit protein uS9 (170 aa).

This sequence belongs to the universal ribosomal protein uS9 family.

The sequence is that of Small ribosomal subunit protein uS9 from Rhodococcus opacus (strain B4).